Reading from the N-terminus, the 67-residue chain is Large ribosomal subunit protein bL35 (67 aa).

Belongs to the bacterial ribosomal protein bL35 family.

The polypeptide is Large ribosomal subunit protein bL35 (Anaeromyxobacter sp. (strain Fw109-5)).